The chain runs to 61 residues: Small ribosomal subunit protein uS14 (61 aa).

4 residues coordinate Zn(2+): C24, C27, C40, and C43.

Belongs to the universal ribosomal protein uS14 family. Zinc-binding uS14 subfamily. In terms of assembly, part of the 30S ribosomal subunit. Contacts proteins S3 and S10. Requires Zn(2+) as cofactor.

In terms of biological role, binds 16S rRNA, required for the assembly of 30S particles and may also be responsible for determining the conformation of the 16S rRNA at the A site. In Campylobacter lari (strain RM2100 / D67 / ATCC BAA-1060), this protein is Small ribosomal subunit protein uS14.